The chain runs to 219 residues: UPF0173 metal-dependent hydrolase LSL_0324 (219 aa).

Belongs to the UPF0173 family.

The protein is UPF0173 metal-dependent hydrolase LSL_0324 of Ligilactobacillus salivarius (strain UCC118) (Lactobacillus salivarius).